Reading from the N-terminus, the 442-residue chain is D-serine dehydratase (442 aa).

At Lys-118 the chain carries N6-(pyridoxal phosphate)lysine.

The protein belongs to the serine/threonine dehydratase family. DsdA subfamily. As to quaternary structure, monomer. Pyridoxal 5'-phosphate serves as cofactor.

It catalyses the reaction D-serine = pyruvate + NH4(+). The chain is D-serine dehydratase from Shigella dysenteriae serotype 1 (strain Sd197).